We begin with the raw amino-acid sequence, 305 residues long: C alpha-dehydrogenase (305 aa).

10–34 is a binding site for NAD(+); sequence FITGGASGAGFGQAKVFGQAGAKIV. Ser-144 serves as a coordination point for substrate. Residue Tyr-157 is the Proton acceptor of the active site.

The protein belongs to the short-chain dehydrogenases/reductases (SDR) family.

Its pathway is secondary metabolite metabolism; lignin degradation. Functionally, catalyzes the C alpha dehydrogenation of arylglycerol-beta-aryl ether (C alpha alcohol type) (compound IV). The polypeptide is C alpha-dehydrogenase (ligD) (Sphingobium sp. (strain NBRC 103272 / SYK-6)).